The sequence spans 242 residues: Segregation and condensation protein A (242 aa).

It belongs to the ScpA family. As to quaternary structure, component of a cohesin-like complex composed of ScpA, ScpB and the Smc homodimer, in which ScpA and ScpB bind to the head domain of Smc. The presence of the three proteins is required for the association of the complex with DNA.

The protein localises to the cytoplasm. Functionally, participates in chromosomal partition during cell division. May act via the formation of a condensin-like complex containing Smc and ScpB that pull DNA away from mid-cell into both cell halves. The polypeptide is Segregation and condensation protein A (Lactococcus lactis subsp. cremoris (strain SK11)).